A 461-amino-acid polypeptide reads, in one-letter code: Photosystem II CP43 reaction center protein (461 aa).

The propeptide occupies 1 to 2; that stretch reads ME. T3 carries the post-translational modification N-acetylthreonine. A Phosphothreonine modification is found at T3. 5 consecutive transmembrane segments (helical) span residues 57-81, 122-143, 166-188, 243-263, and 279-300; these read LFEV…PHLA, LIGP…KDKN, KAMY…RIIT, QPWA…LSYS, and WFNN…ASQS. Position 355 (E355) interacts with [CaMn4O5] cluster. The helical transmembrane segment at 435–459 threads the bilayer; sequence RARAAAAGFEKGIDRLTEPVLSLKP.

It belongs to the PsbB/PsbC family. PsbC subfamily. PSII is composed of 1 copy each of membrane proteins PsbA, PsbB, PsbC, PsbD, PsbE, PsbF, PsbH, PsbI, PsbJ, PsbK, PsbL, PsbM, PsbT, PsbX, PsbY, PsbZ, Psb30/Ycf12, at least 3 peripheral proteins of the oxygen-evolving complex and a large number of cofactors. It forms dimeric complexes. Binds multiple chlorophylls and provides some of the ligands for the Ca-4Mn-5O cluster of the oxygen-evolving complex. It may also provide a ligand for a Cl- that is required for oxygen evolution. PSII binds additional chlorophylls, carotenoids and specific lipids. is required as a cofactor.

The protein resides in the plastid. It is found in the chloroplast thylakoid membrane. One of the components of the core complex of photosystem II (PSII). It binds chlorophyll and helps catalyze the primary light-induced photochemical processes of PSII. PSII is a light-driven water:plastoquinone oxidoreductase, using light energy to abstract electrons from H(2)O, generating O(2) and a proton gradient subsequently used for ATP formation. The chain is Photosystem II CP43 reaction center protein from Stigeoclonium helveticum (Green alga).